Reading from the N-terminus, the 728-residue chain is Dehydrocurvularin biosynthesis regulator (728 aa).

A DNA-binding region (zn(2)-C6 fungal-type) is located at residues 28-58; sequence CWECKRRKMKCRFDPRIASACNGCRRRGSPC. Disordered stretches follow at residues 75-130 and 606-626; these read GTTS…TSQR and QHAT…NSDA. Over residues 89–109 the composition is skewed to polar residues; sequence RATTPSERTDQILTPVSTVRE.

The protein resides in the nucleus. In terms of biological role, transcription factor involved in regulation of the dehydrocurvularin biosynthesis gene cluster. The polypeptide is Dehydrocurvularin biosynthesis regulator (Aspergillus terreus).